A 102-amino-acid polypeptide reads, in one-letter code: Large ribosomal subunit protein bL21 (102 aa).

Belongs to the bacterial ribosomal protein bL21 family. As to quaternary structure, part of the 50S ribosomal subunit. Contacts protein L20.

Its function is as follows. This protein binds to 23S rRNA in the presence of protein L20. The chain is Large ribosomal subunit protein bL21 from Bacillus pumilus (strain SAFR-032).